A 182-amino-acid chain; its full sequence is Probable nicotinate-nucleotide adenylyltransferase (182 aa).

It belongs to the NadD family.

It catalyses the reaction nicotinate beta-D-ribonucleotide + ATP + H(+) = deamido-NAD(+) + diphosphate. Its pathway is cofactor biosynthesis; NAD(+) biosynthesis; deamido-NAD(+) from nicotinate D-ribonucleotide: step 1/1. Functionally, catalyzes the reversible adenylation of nicotinate mononucleotide (NaMN) to nicotinic acid adenine dinucleotide (NaAD). This Aliarcobacter butzleri (strain RM4018) (Arcobacter butzleri) protein is Probable nicotinate-nucleotide adenylyltransferase.